Consider the following 273-residue polypeptide: Putative pyruvate, phosphate dikinase regulatory protein (273 aa).

Residue 153–160 coordinates ADP; it reads GVSRTSKS.

The protein belongs to the pyruvate, phosphate/water dikinase regulatory protein family. PDRP subfamily.

It catalyses the reaction N(tele)-phospho-L-histidyl/L-threonyl-[pyruvate, phosphate dikinase] + ADP = N(tele)-phospho-L-histidyl/O-phospho-L-threonyl-[pyruvate, phosphate dikinase] + AMP + H(+). The enzyme catalyses N(tele)-phospho-L-histidyl/O-phospho-L-threonyl-[pyruvate, phosphate dikinase] + phosphate + H(+) = N(tele)-phospho-L-histidyl/L-threonyl-[pyruvate, phosphate dikinase] + diphosphate. Bifunctional serine/threonine kinase and phosphorylase involved in the regulation of the pyruvate, phosphate dikinase (PPDK) by catalyzing its phosphorylation/dephosphorylation. In Ehrlichia ruminantium (strain Gardel), this protein is Putative pyruvate, phosphate dikinase regulatory protein.